We begin with the raw amino-acid sequence, 287 residues long: Bifunctional protein FolD (287 aa).

Residues 165 to 167 (GRG), Thr-190, and Ile-231 each bind NADP(+).

This sequence belongs to the tetrahydrofolate dehydrogenase/cyclohydrolase family. As to quaternary structure, homodimer.

The catalysed reaction is (6R)-5,10-methylene-5,6,7,8-tetrahydrofolate + NADP(+) = (6R)-5,10-methenyltetrahydrofolate + NADPH. It catalyses the reaction (6R)-5,10-methenyltetrahydrofolate + H2O = (6R)-10-formyltetrahydrofolate + H(+). Its pathway is one-carbon metabolism; tetrahydrofolate interconversion. In terms of biological role, catalyzes the oxidation of 5,10-methylenetetrahydrofolate to 5,10-methenyltetrahydrofolate and then the hydrolysis of 5,10-methenyltetrahydrofolate to 10-formyltetrahydrofolate. In Heliobacterium modesticaldum (strain ATCC 51547 / Ice1), this protein is Bifunctional protein FolD.